The following is a 22-amino-acid chain: Caerin-3.1 (22 aa).

At Lys22 the chain carries Lysine amide.

The protein belongs to the frog skin active peptide (FSAP) family. Caerin subfamily. Expressed by the skin dorsal glands.

The protein resides in the secreted. Antibacterial peptide with narrow spectrum of activity. Inhibits the formation of NO by neuronal nitric oxide synthase. This is Caerin-3.1 from Litoria rothii (Roth's tree frog).